A 759-amino-acid chain; its full sequence is Na(+)/H(+) exchanger beta (759 aa).

Residues 1 to 14 (MPAFSCAFPGCRRD) lie on the Cytoplasmic side of the membrane. A helical transmembrane segment spans residues 15–34 (LLVIVLVVFVGIGLPIEASA). Topologically, residues 35–75 (PAYQSHGTEGSHLTNITNTKKAFPVLAVNYEHVRKPFEIAL) are extracellular. Residue asparagine 49 is glycosylated (N-linked (GlcNAc...) asparagine). The chain crosses the membrane as a helical span at residues 76-95 (WILLALLMKLGFHLIPRLSA). Residues 96–97 (VV) lie on the Cytoplasmic side of the membrane. The chain crosses the membrane as a helical span at residues 98-117 (PESCLLIVVGLLVGGLIKVI). The Extracellular segment spans residues 118–122 (GEEPP). Residues 123–142 (VLDSQLFFLCLLPPIILDAG) form a helical membrane-spanning segment. The Cytoplasmic portion of the chain corresponds to 143–149 (YFLPIRP). Residues 150–169 (FTENVGTILVFAVIGTLWNA) form a helical membrane-spanning segment. Over 170 to 195 (FFMGGLLYALCQIESVGLSGVDLLAC) the chain is Extracellular. Residues 196-214 (LLFGSIVSAVDPVAVLAVF) form a helical membrane-spanning segment. Over 215 to 225 (EEIHINELVHI) the chain is Cytoplasmic. The helical transmembrane segment at 226–244 (LVFGESLLNDAVTVVLYNL) threads the bilayer. The Extracellular segment spans residues 245 to 261 (FEEFSKVGTVTVLDVFL). Residues 262 to 282 (GVVCFFVVSLGGVLVGAIYGF) form a helical membrane-spanning segment. The Cytoplasmic segment spans residues 283–311 (LAAFTSRFTSHTRVIEPLFVFLYSYMAYL). The helical transmembrane segment at 312–330 (SSEMFHLSGIMALIACGVV) threads the bilayer. At 331–352 (MRPYVEANISHKSYTTIKYFLK) the chain is on the extracellular side. An N-linked (GlcNAc...) asparagine glycan is attached at asparagine 338. Residues 353–372 (MWSSVSETLIFIFLGVSTVA) form a helical membrane-spanning segment. Over 373 to 376 (GPHA) the chain is Cytoplasmic. A helical membrane pass occupies residues 377–398 (WNWTFVITTVILCLVSRVLGVI). Topologically, residues 399–446 (GLTFIINKFRIVKLTKKDQFIVAYGGLRGAIAFSLGYLLSNSHQMRNL) are extracellular. Residues 447 to 467 (FLTAIITVIFFTVFVQGMTIR) traverse the membrane as a helical segment. The Cytoplasmic segment spans residues 468–759 (PLVELLAVKK…KEDDDPFMSC (292 aa)). Phosphoserine; by PKA is present on residues serine 641 and serine 648. Residues 681–759 (FPTVHFEQPS…KEDDDPFMSC (79 aa)) are disordered. Basic and acidic residues predominate over residues 707–719 (VPKRPSLKADIEG).

It belongs to the monovalent cation:proton antiporter 1 (CPA1) transporter (TC 2.A.36) family. Activated by cAMP, protein kinase A and protein kinase C.

The protein resides in the basolateral cell membrane. Involved in pH regulation to eliminate acids generated by active metabolism or to counter adverse environmental conditions. Major proton extruding system driven by the inward sodium ion chemical gradient. The sequence is that of Na(+)/H(+) exchanger beta from Oncorhynchus mykiss (Rainbow trout).